The following is a 695-amino-acid chain: Nicastrin (695 aa).

The signal sequence occupies residues 1–22; that stretch reads MEMRLNAASIWLLILSYGATIA. Residues 23 to 654 lie on the Extracellular side of the membrane; that stretch reads QGERTRDKMY…IFLRPSNVHQ (632 aa). Asparagine 45, asparagine 108, asparagine 116, asparagine 138, asparagine 381, asparagine 461, asparagine 489, asparagine 585, and asparagine 609 each carry an N-linked (GlcNAc...) asparagine glycan. A helical membrane pass occupies residues 655–675; the sequence is VTTLSVGIVVLIISFCLVYII. Topologically, residues 676–695 are cytoplasmic; that stretch reads SSRSEVLFEDLPASNAALFG.

The protein belongs to the nicastrin family. In terms of assembly, component of the gamma-secretase complex, a complex composed of a presenilin (Psn) homodimer, nicastrin (Nct), Aph-1 and Pen-2.

The protein localises to the membrane. Essential subunit of the gamma-secretase complex, an endoprotease complex that catalyzes the intramembrane cleavage of integral membrane proteins such as Notch. It probably represents a stabilizing cofactor required for the assembly of the gamma-secretase complex. The chain is Nicastrin from Drosophila melanogaster (Fruit fly).